Here is a 206-residue protein sequence, read N- to C-terminus: Small ribosomal subunit protein uS4 (206 aa).

One can recognise an S4 RNA-binding domain in the interval 96 to 156 (CRLDNVVYRM…EKAKNQLRIV (61 aa)).

It belongs to the universal ribosomal protein uS4 family. In terms of assembly, part of the 30S ribosomal subunit. Contacts protein S5. The interaction surface between S4 and S5 is involved in control of translational fidelity.

Functionally, one of the primary rRNA binding proteins, it binds directly to 16S rRNA where it nucleates assembly of the body of the 30S subunit. With S5 and S12 plays an important role in translational accuracy. This chain is Small ribosomal subunit protein uS4, found in Pseudomonas fluorescens (strain SBW25).